The chain runs to 248 residues: Murein peptide amidase A (248 aa).

The Peptidase M14 domain maps to 3–245 (RYYSNNQEIT…DAFIALLQHD (243 aa)). Zn(2+)-binding residues include His-60, Glu-63, and His-168. Catalysis depends on Glu-221, which acts as the Proton donor/acceptor.

The protein belongs to the peptidase M14 family. As to quaternary structure, homodimer. Zn(2+) is required as a cofactor.

The protein resides in the cytoplasm. It carries out the reaction L-alanyl-gamma-D-glutamyl-meso-2,6-diaminopimelate + H2O = L-alanyl-D-glutamate + meso-2,6-diaminopimelate. It participates in cell wall degradation; peptidoglycan degradation. Functionally, involved in muropeptide degradation. Catalyzes the hydrolysis of the gamma-D-glutamyl-diaminopimelic acid (gamma-D-Glu-Dap) amide bond in the murein tripeptide L-alanyl-gamma-D-glutamyl-meso-diaminopimelic acid, leading to the formation of L-Ala-gamma-D-Glu and Dap. Has weak activity with L-Ala-gamma-D-Glu-L-Lys, MurNAc-tripeptide and gamma-D-Glu-meso-Dap. Cannot hydrolyze murein tetrapeptide. The chain is Murein peptide amidase A from Vibrio campbellii (strain ATCC BAA-1116).